The sequence spans 459 residues: Cysteine--tRNA ligase (459 aa).

Zn(2+) is bound at residue cysteine 28. Positions 30-40 (ITIYDLCHIGH) match the 'HIGH' region motif. Zn(2+) is bound by residues cysteine 209, histidine 234, and glutamate 238. The 'KMSKS' region motif lies at 266–270 (KMSKS). Lysine 269 is an ATP binding site.

The protein belongs to the class-I aminoacyl-tRNA synthetase family. As to quaternary structure, monomer. Zn(2+) serves as cofactor.

It is found in the cytoplasm. It catalyses the reaction tRNA(Cys) + L-cysteine + ATP = L-cysteinyl-tRNA(Cys) + AMP + diphosphate. This is Cysteine--tRNA ligase from Shewanella sediminis (strain HAW-EB3).